A 330-amino-acid polypeptide reads, in one-letter code: Glucokinase (330 aa).

This sequence belongs to the ROK (NagC/XylR) family.

It is found in the cytoplasm. It carries out the reaction D-glucose + ATP = D-glucose 6-phosphate + ADP + H(+). This chain is Glucokinase (glcK), found in Halalkalibacterium halodurans (strain ATCC BAA-125 / DSM 18197 / FERM 7344 / JCM 9153 / C-125) (Bacillus halodurans).